Reading from the N-terminus, the 699-residue chain is UV radiation resistance-associated gene protein (699 aa).

The segment covering Met-1 to Pro-10 has biased composition (low complexity). The disordered stretch occupies residues Met-1–Pro-24. A C2 domain is found at Pro-23 to Asn-149. A sufficient for interaction with STX7; VTI1B AND STX8 region spans residues His-200–Gln-269. A coiled-coil region spans residues Leu-224–Glu-305. The tract at residues Ile-270–Leu-442 is sufficient for interaction with VPS16, required for interaction with CEP63. The tract at residues Gly-443–Lys-699 is required for interaction with PRKDC, XRCC6 and XRCC5. A disordered region spans residues Gly-486–Gly-591. Position 493 is a phosphoserine (Ser-493). Phosphoserine; by MTOR is present on Ser-498. Ser-508 bears the Phosphoserine mark. Thr-518 carries the phosphothreonine modification. Position 522 is a phosphoserine (Ser-522). Residues Tyr-523–Pro-535 show a composition bias toward polar residues. Over residues Thr-545–Asp-556 the composition is skewed to low complexity. Phosphoserine occurs at positions 549 and 550. Positions Phe-557–Asp-567 are enriched in basic and acidic residues. Residues Ser-571, Ser-582, and Ser-689 each carry the phosphoserine modification.

As to quaternary structure, component of the PI3K (PI3KC3/PI3K-III/class III phosphatidylinositol 3-kinase) complex II (PI3KC3-C2) in which the core composed of the catalytic subunit PIK3C3, the regulatory subunit PIK3R4 and BECN1 is associated with UVRAG; in the complex interacts directly with BECN1. PI3KC3-C2 can associate with further regulatory subunits such as RUBCN and probably SH3GLB1/Bif-1. Interacts with SH3GLB1; UVRAG bridges the interaction to BECN1 indicative for an association with the PI3K complex PI3KC3-C2. Interacts with RINT1. Associates with the NRZ complex under basal conditions and dissociates from it under autophagy conditions to associate with the PI3K complex; these complex associations seem to be mutually exclusive. Interacts with VPS16; VPS11; VPS18; VPS33 (VPS33A or VPS33B) and VPS39; indicative for an association with a class C Vps tethering complex (possibly the HOPS complex). Interacts with RAB7A; RAB7A competes with UVRAG for RUBCN binding. Interacts with STX7, VTI1B, STX8. Interacts with PRKDC, XRCC6 and XRCC5; indicative for an association with the DNA-dependent protein kinase complex DNA-PK. Interacts with CEP63. Directly interacts with FEZ1 and SCOC; the interaction with SCOC is reduced by amino acid starvation, but the complex is stabilized in the presence of FEZ1. Interacts with BECN1P1/BECN2. Interacts with SLAMF1. Interacts with RUBCNL/PACER; promoting targeting of UVRAG to autophagosome. Interacts with WNK1. Phosphorylated at Ser-498 by MTOR under basal conditions; increases the interaction with RUBCN implicated in inhibitory effect of RUBCN on PI3KC3 and decreases interaction with RAB7,A and VPS16 and VPS39 (indicative for a class C Vps complex, possibly the HOPS complex). As to expression, highly expressed in brain, lung, kidney and liver.

The protein localises to the late endosome. The protein resides in the lysosome. It is found in the cytoplasmic vesicle. Its subcellular location is the autophagosome. It localises to the early endosome. The protein localises to the endoplasmic reticulum. The protein resides in the midbody. It is found in the chromosome. Its subcellular location is the centromere. In terms of biological role, versatile protein that is involved in regulation of different cellular pathways implicated in membrane trafficking. Involved in regulation of the COPI-dependent retrograde transport from Golgi and the endoplasmic reticulum by associating with the NRZ complex; the function is dependent on its binding to phosphatidylinositol 3-phosphate (PtdIns(3)P). During autophagy acts as a regulatory subunit of the alternative PI3K complex II (PI3KC3-C2) that mediates formation of phosphatidylinositol 3-phosphate and is believed to be involved in maturation of autophagosomes and endocytosis. Activates lipid kinase activity of PIK3C3. Involved in the regulation of degradative endocytic trafficking and cytokinesis, and in regulation of ATG9A transport from the Golgi to the autophagosome; the functions seems to implicate its association with PI3KC3-C2. Involved in maturation of autophagosomes and degradative endocytic trafficking independently of BECN1 but depending on its association with a class C Vps complex (possibly the HOPS complex); the association is also proposed to promote autophagosome recruitment and activation of Rab7 and endosome-endosome fusion events. Enhances class C Vps complex (possibly HOPS complex) association with a SNARE complex and promotes fusogenic SNARE complex formation during late endocytic membrane fusion. In case of negative-strand RNA virus infection is required for efficient virus entry, promotes endocytic transport of virions and is implicated in a VAMP8-specific fusogenic SNARE complex assembly. Functionally, involved in maintaining chromosomal stability. Promotes DNA double-strand break (DSB) repair by association with DNA-dependent protein kinase complex DNA-PK and activating it in non-homologous end joining (NHEJ). Required for centrosome stability and proper chromosome segregation. The chain is UV radiation resistance-associated gene protein (UVRAG) from Homo sapiens (Human).